The primary structure comprises 657 residues: UvrABC system protein B (657 aa).

The Helicase ATP-binding domain maps to 23–414 (KSIKKGNKYQ…KENIFHQIMR (392 aa)). ATP is bound at residue 36–43 (GVTGSGKT). The short motif at 89-112 (YYDYYQPEAYIPRTDVFIEKDSST) is the Beta-hairpin element. Positions 431–593 (QVEILFDEAK…ITPTSVKRHI (163 aa)) constitute a Helicase C-terminal domain. The 36-residue stretch at 622-657 (AKLAKELRKQMLEAAKALEFEKAAAIRDEINKLRDL) folds into the UVR domain.

The protein belongs to the UvrB family. Forms a heterotetramer with UvrA during the search for lesions. Interacts with UvrC in an incision complex.

The protein localises to the cytoplasm. Its function is as follows. The UvrABC repair system catalyzes the recognition and processing of DNA lesions. A damage recognition complex composed of 2 UvrA and 2 UvrB subunits scans DNA for abnormalities. Upon binding of the UvrA(2)B(2) complex to a putative damaged site, the DNA wraps around one UvrB monomer. DNA wrap is dependent on ATP binding by UvrB and probably causes local melting of the DNA helix, facilitating insertion of UvrB beta-hairpin between the DNA strands. Then UvrB probes one DNA strand for the presence of a lesion. If a lesion is found the UvrA subunits dissociate and the UvrB-DNA preincision complex is formed. This complex is subsequently bound by UvrC and the second UvrB is released. If no lesion is found, the DNA wraps around the other UvrB subunit that will check the other stand for damage. This chain is UvrABC system protein B, found in Campylobacter jejuni (strain RM1221).